We begin with the raw amino-acid sequence, 249 residues long: Probable transcriptional regulatory protein Wbm0670 (249 aa).

This sequence belongs to the TACO1 family.

The protein localises to the cytoplasm. The chain is Probable transcriptional regulatory protein Wbm0670 from Wolbachia sp. subsp. Brugia malayi (strain TRS).